Here is a 204-residue protein sequence, read N- to C-terminus: FMN-dependent NADH:quinone oxidoreductase (204 aa).

FMN contacts are provided by residues serine 9, 15 to 17, and 97 to 100; these read SVS and MYNF.

This sequence belongs to the azoreductase type 1 family. As to quaternary structure, homodimer. The cofactor is FMN.

The catalysed reaction is 2 a quinone + NADH + H(+) = 2 a 1,4-benzosemiquinone + NAD(+). The enzyme catalyses N,N-dimethyl-1,4-phenylenediamine + anthranilate + 2 NAD(+) = 2-(4-dimethylaminophenyl)diazenylbenzoate + 2 NADH + 2 H(+). In terms of biological role, quinone reductase that provides resistance to thiol-specific stress caused by electrophilic quinones. Its function is as follows. Also exhibits azoreductase activity. Catalyzes the reductive cleavage of the azo bond in aromatic azo compounds to the corresponding amines. The protein is FMN-dependent NADH:quinone oxidoreductase of Methylobacterium radiotolerans (strain ATCC 27329 / DSM 1819 / JCM 2831 / NBRC 15690 / NCIMB 10815 / 0-1).